Reading from the N-terminus, the 727-residue chain is NADH-ubiquinone oxidoreductase 75 kDa subunit, mitochondrial (727 aa).

Residues 1 to 23 constitute a mitochondrion transit peptide; the sequence is MLRIPIKRALIGLSNSPKGYVRT. The 79-residue stretch at 30-108 folds into the 2Fe-2S ferredoxin-type domain; the sequence is NLIEVFVDGQ…GWNILTNSEK (79 aa). The [2Fe-2S] cluster site is built by C64, C75, and C78. K84 carries the N6-acetyllysine modification. C92 lines the [2Fe-2S] cluster pocket. The region spanning 108 to 147 is the 4Fe-4S His(Cys)3-ligated-type domain; that stretch reads KSKKAREGVMEFLLANHPLDCPICDQGGECDLQDQSMMFG. H124, C128, C131, C137, C176, C179, C182, and C226 together coordinate [4Fe-4S] cluster. The 4Fe-4S Mo/W bis-MGD-type domain occupies 245–301; it reads TRKTESIDVMDAVGSNIVVSTRTGEVMRILPRMHEDINEEWISDKTRFAYDGLKRQR. Position 461 is a phosphoserine (S461). 3 positions are modified to N6-acetyllysine: K467, K499, and K709.

This sequence belongs to the complex I 75 kDa subunit family. In terms of assembly, core subunit of respiratory chain NADH dehydrogenase (Complex I) which is composed of 45 different subunits. This is the largest subunit of complex I and it is a component of the iron-sulfur (IP) fragment of the enzyme. Complex I associates with ubiquinol-cytochrome reductase complex (Complex III) to form supercomplexes. In astrocytes, less complex I is assembled into supercomplexes as compared to neurons. Interacts with MDM2. Interacts with AKAP1. The cofactor is [2Fe-2S] cluster. [4Fe-4S] cluster is required as a cofactor. In terms of processing, acetylation of Lys-84 is observed in liver mitochondria from fasted mice but not from fed mice. Brain. More abundant in neurons than in astrocytes (at protein level).

The protein localises to the mitochondrion inner membrane. It catalyses the reaction a ubiquinone + NADH + 5 H(+)(in) = a ubiquinol + NAD(+) + 4 H(+)(out). Its function is as follows. Core subunit of the mitochondrial membrane respiratory chain NADH dehydrogenase (Complex I) which catalyzes electron transfer from NADH through the respiratory chain, using ubiquinone as an electron acceptor. Essential for catalysing the entry and efficient transfer of electrons within complex I. Plays a key role in the assembly and stability of complex I and participates in the association of complex I with ubiquinol-cytochrome reductase complex (Complex III) to form supercomplexes. This is NADH-ubiquinone oxidoreductase 75 kDa subunit, mitochondrial (Ndufs1) from Mus musculus (Mouse).